Reading from the N-terminus, the 532-residue chain is Putative cysteine desulfurase PbSufS (532 aa).

An N-terminal signal peptide occupies residues 1-18 (MNNESICILLLLFVKITS). N6-(pyridoxal phosphate)lysine is present on Lys-286. Residue Cys-480 is the Cysteine persulfide intermediate of the active site.

It belongs to the class-V pyridoxal-phosphate-dependent aminotransferase family. Csd subfamily. Monomer. Interacts with SufE; interaction enhances cysteine desulfurase activity of SufS. The cofactor is pyridoxal 5'-phosphate.

Its subcellular location is the plastid. It localises to the apicoplast. The catalysed reaction is (sulfur carrier)-H + L-cysteine = (sulfur carrier)-SH + L-alanine. It functions in the pathway cofactor biosynthesis; iron-sulfur cluster biosynthesis. In terms of biological role, catalyzes sulfur activation and mobilization in sulfur mobilization (SUF) pathway for iron-sulfur (Fe-S) cluster biogenesis. Active when in complex with a partner protein SufE. Required for apicoplast maintenance. Plays a role in the development of sporozoites in oocysts in mosquitoes. The sequence is that of Putative cysteine desulfurase PbSufS from Plasmodium berghei (strain Anka).